The primary structure comprises 316 residues: 4-hydroxy-3-methylbut-2-enyl diphosphate reductase (316 aa).

C12 lines the [4Fe-4S] cluster pocket. (2E)-4-hydroxy-3-methylbut-2-enyl diphosphate contacts are provided by H41 and H74. Residues H41 and H74 each coordinate dimethylallyl diphosphate. Isopentenyl diphosphate is bound by residues H41 and H74. C96 contacts [4Fe-4S] cluster. H124 is a binding site for (2E)-4-hydroxy-3-methylbut-2-enyl diphosphate. H124 lines the dimethylallyl diphosphate pocket. Isopentenyl diphosphate is bound at residue H124. The Proton donor role is filled by E126. T167 serves as a coordination point for (2E)-4-hydroxy-3-methylbut-2-enyl diphosphate. C197 contributes to the [4Fe-4S] cluster binding site. S225, S226, N227, and S269 together coordinate (2E)-4-hydroxy-3-methylbut-2-enyl diphosphate. 4 residues coordinate dimethylallyl diphosphate: S225, S226, N227, and S269. Residues S225, S226, N227, and S269 each coordinate isopentenyl diphosphate.

It belongs to the IspH family. In terms of assembly, homodimer. It depends on [4Fe-4S] cluster as a cofactor.

It catalyses the reaction isopentenyl diphosphate + 2 oxidized [2Fe-2S]-[ferredoxin] + H2O = (2E)-4-hydroxy-3-methylbut-2-enyl diphosphate + 2 reduced [2Fe-2S]-[ferredoxin] + 2 H(+). It carries out the reaction dimethylallyl diphosphate + 2 oxidized [2Fe-2S]-[ferredoxin] + H2O = (2E)-4-hydroxy-3-methylbut-2-enyl diphosphate + 2 reduced [2Fe-2S]-[ferredoxin] + 2 H(+). It functions in the pathway isoprenoid biosynthesis; dimethylallyl diphosphate biosynthesis; dimethylallyl diphosphate from (2E)-4-hydroxy-3-methylbutenyl diphosphate: step 1/1. It participates in isoprenoid biosynthesis; isopentenyl diphosphate biosynthesis via DXP pathway; isopentenyl diphosphate from 1-deoxy-D-xylulose 5-phosphate: step 6/6. Functionally, catalyzes the conversion of 1-hydroxy-2-methyl-2-(E)-butenyl 4-diphosphate (HMBPP) into a mixture of isopentenyl diphosphate (IPP) and dimethylallyl diphosphate (DMAPP). Acts in the terminal step of the DOXP/MEP pathway for isoprenoid precursor biosynthesis. This Klebsiella pneumoniae (strain 342) protein is 4-hydroxy-3-methylbut-2-enyl diphosphate reductase.